A 712-amino-acid chain; its full sequence is Glycine--tRNA ligase beta subunit (712 aa).

Belongs to the class-II aminoacyl-tRNA synthetase family. As to quaternary structure, tetramer of two alpha and two beta subunits.

It is found in the cytoplasm. It carries out the reaction tRNA(Gly) + glycine + ATP = glycyl-tRNA(Gly) + AMP + diphosphate. This chain is Glycine--tRNA ligase beta subunit, found in Acaryochloris marina (strain MBIC 11017).